A 302-amino-acid chain; its full sequence is Coenzyme PQQ synthesis protein B (302 aa).

It belongs to the PqqB family.

It functions in the pathway cofactor biosynthesis; pyrroloquinoline quinone biosynthesis. In terms of biological role, may be involved in the transport of PQQ or its precursor to the periplasm. In Azotobacter vinelandii (strain DJ / ATCC BAA-1303), this protein is Coenzyme PQQ synthesis protein B.